A 784-amino-acid chain; its full sequence is Cyclin-dependent kinase 11B (784 aa).

Over residues 18–60 (QEKKRRKEQEEKAEIKRLKNSDDRDSKRDSLEEGELRDHRMEI) the composition is skewed to basic and acidic residues. Positions 18–401 (QEKKRRKEQE…EGDYVPDSPA (384 aa)) are disordered. Phosphoserine is present on residues Ser47 and Ser72. A compositionally biased stretch (basic residues) spans 95-113 (EKAHHRKDEKRKEKRRHRS). Composition is skewed to basic and acidic residues over residues 114–131 (HSAE…EREH), 138–227 (REEQ…DKGK), and 238–263 (PPRE…RDLL). Ser115 carries the phosphoserine modification. Ser270 is modified (phosphoserine). Over residues 278 to 289 (SAESSSAESGSG) the composition is skewed to low complexity. Acidic residues-rich tracts occupy residues 290-353 (SEEE…EDRE) and 372-381 (DSEEGEEEVG). The region spanning 427 to 712 (FQCLNRIEEG…AEDGLKHEYF (286 aa)) is the Protein kinase domain. ATP is bound by residues 433–441 (IEEGTYGVV) and Lys456. A Phosphoserine; by CDK7 modification is found at Ser471. Phosphothreonine; by CDK7 is present on Thr477. Asp551 serves as the catalytic Proton acceptor. Ser578 carries the post-translational modification Phosphoserine. The residue at position 583 (Tyr583) is a Phosphotyrosine. Thr584 carries the phosphothreonine modification. Residue Lys630 forms a Glycyl lysine isopeptide (Lys-Gly) (interchain with G-Cter in SUMO2) linkage. The segment at 722–784 (SMFPTWPAKS…AAGPGFSLKF (63 aa)) is disordered. At Thr740 the chain carries Phosphothreonine. Ser741 is subject to Phosphoserine.

The protein belongs to the protein kinase superfamily. CMGC Ser/Thr protein kinase family. CDC2/CDKX subfamily. In terms of assembly, may interact PAK1 and RANBP9. p110C interacts with RNPS1. Interacts with CCND3. Interacts with CCNL1 and CCNL2. Forms complexes with pre-mRNA-splicing factors, including at least SRSF1, SRSF2 AND SRSF7/SLU7. It depends on Mg(2+) as a cofactor. In terms of processing, phosphorylation at Ser-115 creates a binding site for 14-3-3 proteins.

The catalysed reaction is L-seryl-[protein] + ATP = O-phospho-L-seryl-[protein] + ADP + H(+). It catalyses the reaction L-threonyl-[protein] + ATP = O-phospho-L-threonyl-[protein] + ADP + H(+). Its activity is regulated as follows. Phosphorylation at Thr-437 or Tyr-438 inactivates the enzyme, while phosphorylation at Thr-584 activates it. Functionally, plays multiple roles in cell cycle progression, cytokinesis and apoptosis. Involved in pre-mRNA splicing in a kinase activity-dependent manner. May act as a negative regulator of normal cell cycle progression. The polypeptide is Cyclin-dependent kinase 11B (Cdk11b) (Mus musculus (Mouse)).